Here is a 108-residue protein sequence, read N- to C-terminus: Iron-sulfur cluster assembly protein CyaY (108 aa).

Belongs to the frataxin family.

In terms of biological role, involved in iron-sulfur (Fe-S) cluster assembly. May act as a regulator of Fe-S biogenesis. The sequence is that of Iron-sulfur cluster assembly protein CyaY from Burkholderia mallei (strain NCTC 10247).